Consider the following 203-residue polypeptide: Small ribosomal subunit protein uS3 (203 aa).

The 75-residue stretch at 39–113 (IREIIRRNFL…NHVLNAKNIA (75 aa)) folds into the KH type-2 domain.

This sequence belongs to the universal ribosomal protein uS3 family. In terms of assembly, part of the 30S ribosomal subunit. Forms a tight complex with proteins S10 and S14.

Its function is as follows. Binds the lower part of the 30S subunit head. Binds mRNA in the 70S ribosome, positioning it for translation. The chain is Small ribosomal subunit protein uS3 from Carsonella ruddii.